A 213-amino-acid polypeptide reads, in one-letter code: uncharacterized protein (213 aa).

Residues Gly53, Glu74, and Asp97 each contribute to the S-adenosyl-L-methionine site.

Belongs to the methyltransferase superfamily. YrrT family.

Its function is as follows. Could be a S-adenosyl-L-methionine-dependent methyltransferase. This is an uncharacterized protein from Bacillus velezensis (strain DSM 23117 / BGSC 10A6 / LMG 26770 / FZB42) (Bacillus amyloliquefaciens subsp. plantarum).